The following is a 307-amino-acid chain: Serine/threonine-protein phosphatase PP2A-5 catalytic subunit (307 aa).

Mn(2+)-binding residues include aspartate 55, histidine 57, aspartate 83, and asparagine 115. The active-site Proton donor is the histidine 116. Residues histidine 165 and histidine 239 each contribute to the Mn(2+) site. At leucine 307 the chain carries Leucine methyl ester.

This sequence belongs to the PPP phosphatase family. PP-2A subfamily. PP2A consists of a common heterodimeric core enzyme, composed of a 36 kDa catalytic subunit (subunit C) and a 65 kDa constant regulatory subunit (subunit A), that associates with a variety of regulatory subunits such as subunits B (the R2/B/PR55/B55, R3/B''/PR72/PR130/PR59 and R5/B'/B56 families). Also interacts with CHIP and TAF12B. Interacts with B'THETA. Interacts with CLC-A, CLC-B, CLC-C and CLC-G. Mn(2+) is required as a cofactor. Reversibly methyl esterified on Leu-307 by leucine carboxyl methyltransferase 1 (LCMT1) and pectin methylesterase 1 (PME1). Carboxyl methylation influences the affinity of the catalytic subunit for the different regulatory subunits, thereby modulating the PP2A holoenzyme's substrate specificity, enzyme activity and cellular localization. In terms of processing, phosphorylation of either threonine (by autophosphorylation-activated protein kinase) or tyrosine results in inactivation of the phosphatase. Auto-dephosphorylation has been suggested as a mechanism for reactivation. Post-translationally, ubiquitinated. CHIP-mediated ubiquitination enhances phosphatase activity after an abiotic stress such as low temperature or darkness.

It localises to the cytoplasm. Its subcellular location is the cytosol. The protein resides in the peroxisome. The enzyme catalyses O-phospho-L-seryl-[protein] + H2O = L-seryl-[protein] + phosphate. It catalyses the reaction O-phospho-L-threonyl-[protein] + H2O = L-threonyl-[protein] + phosphate. In terms of biological role, associates with the serine/threonine-protein phosphatase PP2A regulatory subunits A and B' to positively regulates beta-oxidation of fatty acids and protoauxins in peroxisomes by dephosphorylating peroxisomal beta-oxidation-related proteins. Involved in the positive regulation of salt stress responses. May function by increasing chloride channel activities on vacuolar membranes. The sequence is that of Serine/threonine-protein phosphatase PP2A-5 catalytic subunit from Arabidopsis thaliana (Mouse-ear cress).